The following is a 63-amino-acid chain: Large ribosomal subunit protein uL29 (63 aa).

It belongs to the universal ribosomal protein uL29 family.

The chain is Large ribosomal subunit protein uL29 from Escherichia coli O8 (strain IAI1).